The sequence spans 491 residues: Glycogen synthase (491 aa).

Lysine 15 is a binding site for ADP-alpha-D-glucose.

The protein belongs to the glycosyltransferase 1 family. Bacterial/plant glycogen synthase subfamily.

It carries out the reaction [(1-&gt;4)-alpha-D-glucosyl](n) + ADP-alpha-D-glucose = [(1-&gt;4)-alpha-D-glucosyl](n+1) + ADP + H(+). Its pathway is glycan biosynthesis; glycogen biosynthesis. Functionally, synthesizes alpha-1,4-glucan chains using ADP-glucose. This Treponema denticola (strain ATCC 35405 / DSM 14222 / CIP 103919 / JCM 8153 / KCTC 15104) protein is Glycogen synthase.